A 283-amino-acid polypeptide reads, in one-letter code: Bis(5'-nucleosyl)-tetraphosphatase, symmetrical (283 aa).

Belongs to the Ap4A hydrolase family.

The catalysed reaction is P(1),P(4)-bis(5'-adenosyl) tetraphosphate + H2O = 2 ADP + 2 H(+). Functionally, hydrolyzes diadenosine 5',5'''-P1,P4-tetraphosphate to yield ADP. The protein is Bis(5'-nucleosyl)-tetraphosphatase, symmetrical of Cronobacter sakazakii (strain ATCC BAA-894) (Enterobacter sakazakii).